We begin with the raw amino-acid sequence, 327 residues long: MGSLLWLAVAYVMGSIPFGLLFAKMFCGTDPRTGGSRNVGATNVARLCGTKVGVLTLVCDALKGAIPVAVALSISDSTVFHSLTALAALLGHLYSCFLSFKGGKAVATTVGVFLPLAFWPLVLSGIACLAVIWRSGFVSLGSLTLVTAMPAMLLLGGHWKLVPLALVVMVLVYWSHRENIGRLSRGEEKPWQKKHHDAAQGTDAGAAPEAAADAAHAGTVDCGCDCGCDAHKPSTEAAPSQETSDASAHGAEAPVAADEGDKRENEEHDNAPEASAAESKPEDKPAGKTVGKPASRSVAKPASKSAGKTGGKAADKSAGKSGKSSGQ.

5 consecutive transmembrane segments (helical) span residues 3–23, 52–72, 78–98, 112–132, and 152–172; these read SLLW…LLFA, VGVL…AVAL, TVFH…SCFL, VFLP…LAVI, and MLLL…MVLV. 2 disordered regions span residues 184–212 and 233–327; these read SRGE…EAAA and PSTE…SSGQ. The span at 199-212 shows a compositional bias: low complexity; that stretch reads AQGTDAGAAPEAAA. Over residues 237 to 246 the composition is skewed to polar residues; the sequence is AAPSQETSDA. Over residues 259-271 the composition is skewed to basic and acidic residues; it reads EGDKRENEEHDNA.

It belongs to the PlsY family. As to quaternary structure, probably interacts with PlsX.

It is found in the cell inner membrane. It carries out the reaction an acyl phosphate + sn-glycerol 3-phosphate = a 1-acyl-sn-glycero-3-phosphate + phosphate. The protein operates within lipid metabolism; phospholipid metabolism. Catalyzes the transfer of an acyl group from acyl-phosphate (acyl-PO(4)) to glycerol-3-phosphate (G3P) to form lysophosphatidic acid (LPA). This enzyme utilizes acyl-phosphate as fatty acyl donor, but not acyl-CoA or acyl-ACP. The protein is Glycerol-3-phosphate acyltransferase of Nitratidesulfovibrio vulgaris (strain ATCC 29579 / DSM 644 / CCUG 34227 / NCIMB 8303 / VKM B-1760 / Hildenborough) (Desulfovibrio vulgaris).